The primary structure comprises 346 residues: DNA-directed RNA polymerase subunit alpha (346 aa).

An alpha N-terminal domain (alpha-NTD) region spans residues 1–243 (MTMNNPNLTM…EQLSIWVNFE (243 aa)). The tract at residues 260 to 346 (LNENLFRSVE…ERWKAQQAQA (87 aa)) is alpha C-terminal domain (alpha-CTD).

It belongs to the RNA polymerase alpha chain family. Homodimer. The RNAP catalytic core consists of 2 alpha, 1 beta, 1 beta' and 1 omega subunit. When a sigma factor is associated with the core the holoenzyme is formed, which can initiate transcription.

It carries out the reaction RNA(n) + a ribonucleoside 5'-triphosphate = RNA(n+1) + diphosphate. Its function is as follows. DNA-dependent RNA polymerase catalyzes the transcription of DNA into RNA using the four ribonucleoside triphosphates as substrates. The protein is DNA-directed RNA polymerase subunit alpha of Sorangium cellulosum (strain So ce56) (Polyangium cellulosum (strain So ce56)).